The sequence spans 176 residues: Cytochrome b (176 aa).

Helical transmembrane passes span 33 to 53 (FGSL…FLAM), 77 to 98 (WLLR…YLHI), and 113 to 133 (WNVG…GYVL). Residues H83 and H97 each coordinate heme b.

It belongs to the cytochrome b family. In terms of assembly, the cytochrome bc1 complex contains 11 subunits: 3 respiratory subunits (MT-CYB, CYC1 and UQCRFS1), 2 core proteins (UQCRC1 and UQCRC2) and 6 low-molecular weight proteins (UQCRH/QCR6, UQCRB/QCR7, UQCRQ/QCR8, UQCR10/QCR9, UQCR11/QCR10 and a cleavage product of UQCRFS1). This cytochrome bc1 complex then forms a dimer. The cofactor is heme b.

The protein resides in the mitochondrion inner membrane. Functionally, component of the ubiquinol-cytochrome c reductase complex (complex III or cytochrome b-c1 complex) that is part of the mitochondrial respiratory chain. The b-c1 complex mediates electron transfer from ubiquinol to cytochrome c. Contributes to the generation of a proton gradient across the mitochondrial membrane that is then used for ATP synthesis. The polypeptide is Cytochrome b (MT-CYB) (Nyctinomops aurispinosus (Peale's free-tailed bat)).